A 760-amino-acid chain; its full sequence is Xaa-Pro dipeptidyl-peptidase (760 aa).

Catalysis depends on charge relay system residues Ser-349, Asp-469, and His-499.

This sequence belongs to the peptidase S15 family. As to quaternary structure, homodimer.

The protein localises to the cytoplasm. It carries out the reaction Hydrolyzes Xaa-Pro-|- bonds to release unblocked, N-terminal dipeptides from substrates including Ala-Pro-|-p-nitroanilide and (sequentially) Tyr-Pro-|-Phe-Pro-|-Gly-Pro-|-Ile.. In terms of biological role, removes N-terminal dipeptides sequentially from polypeptides having unsubstituted N-termini provided that the penultimate residue is proline. This is Xaa-Pro dipeptidyl-peptidase from Streptococcus pyogenes serotype M4 (strain MGAS10750).